The primary structure comprises 294 residues: ATP synthase gamma chain (294 aa).

This sequence belongs to the ATPase gamma chain family. F-type ATPases have 2 components, CF(1) - the catalytic core - and CF(0) - the membrane proton channel. CF(1) has five subunits: alpha(3), beta(3), gamma(1), delta(1), epsilon(1). CF(0) has three main subunits: a, b and c.

It is found in the cell inner membrane. In terms of biological role, produces ATP from ADP in the presence of a proton gradient across the membrane. The gamma chain is believed to be important in regulating ATPase activity and the flow of protons through the CF(0) complex. The polypeptide is ATP synthase gamma chain (Campylobacter jejuni subsp. doylei (strain ATCC BAA-1458 / RM4099 / 269.97)).